We begin with the raw amino-acid sequence, 295 residues long: HTH-type transcriptional regulator ShiR (295 aa).

The region spanning 1 to 58 is the HTH lysR-type domain; that stretch reads MEIRWLEGFIAVAEELHFSNAAIRLGMPQSPLSQLIRRLESELGQKLFDRSTRSVELT. A DNA-binding region (H-T-H motif) is located at residues 18–37; it reads FSNAAIRLGMPQSPLSQLIR.

The protein belongs to the LysR transcriptional regulatory family.

Activates expression of the shikimate transporter ShiA in the presence of shikimate. Binds to the shiA promoter region. The protein is HTH-type transcriptional regulator ShiR of Corynebacterium glutamicum (strain R).